We begin with the raw amino-acid sequence, 399 residues long: Glycerate 2-kinase (399 aa).

Lysine 48 is a substrate binding site.

The protein belongs to the glycerate kinase type-1 family. As to quaternary structure, homodimer. Requires Mg(2+) as cofactor. Ni(2+) serves as cofactor. It depends on Mn(2+) as a cofactor. Co(2+) is required as a cofactor. The cofactor is Ca(2+). Requires Zn(2+) as cofactor. Sr(2+) serves as cofactor.

The enzyme catalyses (R)-glycerate + ATP = (2R)-2-phosphoglycerate + ADP + H(+). Functionally, catalyzes the ATP-dependent phosphorylation of D-glycerate to 2-phosphoglycerate. It can also utilize GTP, CTP, UTP, ADP, AMP or pyrophosphate as phosphate donor. The sequence is that of Glycerate 2-kinase (gck) from Sulfurisphaera tokodaii (strain DSM 16993 / JCM 10545 / NBRC 100140 / 7) (Sulfolobus tokodaii).